Here is a 690-residue protein sequence, read N- to C-terminus: Calpain-9 (690 aa).

A disordered region spans residues 1-23 (MPYLHRSLRPQPQPVPGDARTIH). Residues 42–337 (LFEDADFPAS…FDKVEICNLT (296 aa)) form the Calpain catalytic domain. The Ca(2+) site is built by Leu-81, Gly-83, and Asp-88. The active site involves Cys-97. Glu-167 is a binding site for Ca(2+). Residues His-254 and Asn-278 contribute to the active site. 5 residues coordinate Ca(2+): Glu-284, Asp-291, Leu-312, Asp-314, and Glu-316. The segment at 338–521 (PDALEDSALH…PQEEETEEEQ (184 aa)) is domain III. 3 consecutive EF-hand domains span residues 518-552 (EEEQQFRALFQRVAGEDMEVSAEELEYVLNAVLQK), 561-589 (LSLLSCRNIISLMDTSGNGKLEFEEFRVF), and 591-626 (DKLKHWMDLFLQFDVDKSGTMSSYELRTALKAAGFQ). Residues 522–690 (QFRALFQRVA…NEFISLTMNI (169 aa)) are domain IV. Ca(2+)-binding residues include Asp-574, Ser-576, Asn-578, Lys-580, Glu-585, Asp-604, Asp-606, Ser-608, Thr-610, and Glu-615.

This sequence belongs to the peptidase C2 family. In terms of tissue distribution, predominantly expressed in stomach and small intestine, although low levels of expression in other organs.

The protein resides in the cytoplasm. In terms of biological role, calcium-regulated non-lysosomal thiol-protease. This Mus musculus (Mouse) protein is Calpain-9 (Capn9).